The primary structure comprises 450 residues: Zinc metalloproteinase nas-13 (450 aa).

An N-terminal signal peptide occupies residues 1-31 (MPSPTSSSASVFSSHLFFVFCIFSQIAQSYA). N-linked (GlcNAc...) asparagine glycosylation occurs at Asn-68. Residues 110 to 303 (NAVRQTYLKW…YKINMLYNCP (194 aa)) form the Peptidase M12A domain. 2 cysteine pairs are disulfide-bonded: Cys-152-Cys-302 and Cys-174-Cys-193. A Zn(2+)-binding site is contributed by His-201. Glu-202 is an active-site residue. 2 residues coordinate Zn(2+): His-205 and His-211. N-linked (GlcNAc...) asparagine glycosylation occurs at Asn-225. Positions 349-351 (RGD) match the Cell attachment site motif. 6 disulfides stabilise this stretch: Cys-368/Cys-404, Cys-375/Cys-397, Cys-384/Cys-401, Cys-414/Cys-450, Cys-421/Cys-443, and Cys-430/Cys-447. ShKT domains follow at residues 368–404 (CEDR…CGKC) and 414–450 (CEDA…CNFC). The N-linked (GlcNAc...) asparagine glycan is linked to Asn-431.

It depends on Zn(2+) as a cofactor.

The protein localises to the secreted. In terms of biological role, metalloprotease. The protein is Zinc metalloproteinase nas-13 (nas-13) of Caenorhabditis elegans.